Reading from the N-terminus, the 269-residue chain is MKLNRAIGVIDSGVGGLTVAKELIRQLPKERIIYLGDTARCPYGPRSREEVRQFTWEMTEHLLDLNIKMLVIACNTATAVVLEEMQKQLPIPVVGVIHPGSRTALKVTNTYHVGIIGTIGTVKSGAYEEALKSINNRVMVESLACPPFVELVESGNFESEMAYEVVRETLQPLKSTDIDTLILGCTHYPILGPVIKKVMGDKVQLISSGDETAREVSTILYHSKMLNEGEEQSDHLFLTTGKIGLFKEIASKWFGQPIENVKHIHLEKE.

Substrate is bound by residues 11–12 (DS) and 43–44 (YG). Cys74 serves as the catalytic Proton donor/acceptor. 75–76 (NT) contacts substrate. Catalysis depends on Cys185, which acts as the Proton donor/acceptor. 186–187 (TH) is a binding site for substrate.

Belongs to the aspartate/glutamate racemases family.

It carries out the reaction L-glutamate = D-glutamate. It participates in cell wall biogenesis; peptidoglycan biosynthesis. Its function is as follows. Provides the (R)-glutamate required for cell wall biosynthesis. The protein is Glutamate racemase of Bacillus cereus (strain G9842).